Reading from the N-terminus, the 147-residue chain is uncharacterized protein (147 aa).

The CMP/dCMP-type deaminase domain occupies 4–120 (KWAKRFFQMA…EQTEDFLSRW (117 aa)). H67 lines the Zn(2+) pocket. E69 (proton donor) is an active-site residue. 2 residues coordinate Zn(2+): C92 and C95.

Belongs to the cytidine and deoxycytidylate deaminase family. The cofactor is Zn(2+).

This is an uncharacterized protein from Aliivibrio fischeri (Vibrio fischeri).